Reading from the N-terminus, the 55-residue chain is MAKDKDVRPIIKLKSTAGTGYTYVTRKNRRNDPDRMVLKKYDPKIRQHVEFREER.

Belongs to the bacterial ribosomal protein bL33 family.

This is Large ribosomal subunit protein bL33 from Pseudarthrobacter chlorophenolicus (strain ATCC 700700 / DSM 12829 / CIP 107037 / JCM 12360 / KCTC 9906 / NCIMB 13794 / A6) (Arthrobacter chlorophenolicus).